Consider the following 256-residue polypeptide: MALPDFSMRQLLEAGVHFGHQTHRWNPKMKPYIFGDRNNIHIIDLAQTVPLLSRALQVVSDTVARGGRVLFVGTKRQASELIADSAKRSAQYYVNARWLGGMMTNWKTISNSIQRLRKLDEILNGDAQGFTKKERLNLEREREKLDKALGGIRDMGGTPDLMFIIDTNKEKIAIDEAKRLGIPVVAIIDSNCDPDLIDYPIPGNDDASRAIALYCDLIARAAIDGIARQQSASGRDLGASIEAPVEPTLVEGGTEA.

Belongs to the universal ribosomal protein uS2 family.

This Rhizobium rhizogenes (strain K84 / ATCC BAA-868) (Agrobacterium radiobacter) protein is Small ribosomal subunit protein uS2.